We begin with the raw amino-acid sequence, 393 residues long: Methylthioribose kinase (393 aa).

ATP contacts are provided by residues Asn-38, Lys-53, and 107 to 109; that span reads EDL. Asp-225 contacts substrate. Position 242-244 (242-244) interacts with ATP; that stretch reads DPE. Residue Arg-332 participates in substrate binding.

Belongs to the methylthioribose kinase family. As to quaternary structure, homodimer.

It carries out the reaction 5-(methylsulfanyl)-D-ribose + ATP = 5-(methylsulfanyl)-alpha-D-ribose 1-phosphate + ADP + H(+). It functions in the pathway amino-acid biosynthesis; L-methionine biosynthesis via salvage pathway; S-methyl-5-thio-alpha-D-ribose 1-phosphate from S-methyl-5'-thioadenosine (hydrolase route): step 2/2. Catalyzes the phosphorylation of methylthioribose into methylthioribose-1-phosphate. In Bacillus cereus (strain B4264), this protein is Methylthioribose kinase.